The chain runs to 450 residues: UDP-N-acetylmuramoylalanine--D-glutamate ligase (450 aa).

119-125 contributes to the ATP binding site; sequence GSNGKTT.

The protein belongs to the MurCDEF family.

Its subcellular location is the cytoplasm. It catalyses the reaction UDP-N-acetyl-alpha-D-muramoyl-L-alanine + D-glutamate + ATP = UDP-N-acetyl-alpha-D-muramoyl-L-alanyl-D-glutamate + ADP + phosphate + H(+). It functions in the pathway cell wall biogenesis; peptidoglycan biosynthesis. Functionally, cell wall formation. Catalyzes the addition of glutamate to the nucleotide precursor UDP-N-acetylmuramoyl-L-alanine (UMA). The sequence is that of UDP-N-acetylmuramoylalanine--D-glutamate ligase from Bacillus mycoides (strain KBAB4) (Bacillus weihenstephanensis).